Here is a 77-residue protein sequence, read N- to C-terminus: Cell division topological specificity factor (77 aa).

The protein belongs to the MinE family.

In terms of biological role, prevents the cell division inhibition by proteins MinC and MinD at internal division sites while permitting inhibition at polar sites. This ensures cell division at the proper site by restricting the formation of a division septum at the midpoint of the long axis of the cell. The sequence is that of Cell division topological specificity factor from Helicobacter acinonychis (strain Sheeba).